The sequence spans 90 residues: MMSKLGVLLTICLLLFPHTAVPLDGDQHADQPAERLQDDISSEHHPMLNSIRRREQNQFMSFTSVKLRDSRGERCCGPTACMAGCRPCCG.

The first 22 residues, 1–22 (MMSKLGVLLTICLLLFPHTAVP), serve as a signal peptide directing secretion. Residues 23-74 (LDGDQHADQPAERLQDDISSEHHPMLNSIRRREQNQFMSFTSVKLRDSRGER) constitute a propeptide that is removed on maturation. The tract at residues 24–43 (DGDQHADQPAERLQDDISSE) is disordered. The segment covering 25-43 (GDQHADQPAERLQDDISSE) has biased composition (basic and acidic residues). Cystine bridges form between cysteine 75-cysteine 89, cysteine 76-cysteine 85, and cysteine 81-cysteine 88. Proline 87 bears the 4-hydroxyproline mark. Cysteine amide is present on cysteine 89.

The protein belongs to the conotoxin M superfamily. As to expression, expressed by the venom duct.

It localises to the secreted. The protein is Conotoxin TxMMSK-06 of Conus textile (Cloth-of-gold cone).